Here is a 429-residue protein sequence, read N- to C-terminus: MPIIEQVGAREILDSRGNPTVEVEVALIDGTFARAAVPSGASTGEHEAVELRDGGDRYGGKGVQKAVQAVLDEIGPAVIGLNADDQRLVDQALVDLDGTPDKSRLGGNAILGVSLAVAKAAADSAELPLFRYVGGPNAHILPVPMMNILNGGAHADTAVDIQEFMVAPIGAPSFVEALRWGAEVYHALKSVLKKEGLSTGLGDEGGFAPDVAGTTAALDLISRAIESAGLRPGADVALALDAAATEFFTDGTGYVFEGTTRTADQMTEFYAGLLGAYPLVSIEDPLSEDDWDGWAALTASIGDRVQIVGDDIFVTNPERLEEGIERGVANALLVKVNQIGTLTETLDAVTLAHHGGYRTMISHRSGETEDTMIADLAVAIGSGQIKTGAPARSERVAKYNQLLRIEEALGDAARYAGDLAFPRFACETK.

Glutamine 162 contributes to the (2R)-2-phosphoglycerate binding site. Catalysis depends on glutamate 204, which acts as the Proton donor. 3 residues coordinate Mg(2+): aspartate 241, glutamate 283, and aspartate 310. (2R)-2-phosphoglycerate is bound by residues lysine 335, arginine 364, serine 365, and lysine 386. The active-site Proton acceptor is the lysine 335.

Belongs to the enolase family. It depends on Mg(2+) as a cofactor.

Its subcellular location is the cytoplasm. The protein localises to the secreted. It localises to the cell surface. The enzyme catalyses (2R)-2-phosphoglycerate = phosphoenolpyruvate + H2O. It functions in the pathway carbohydrate degradation; glycolysis; pyruvate from D-glyceraldehyde 3-phosphate: step 4/5. Its function is as follows. Catalyzes the reversible conversion of 2-phosphoglycerate (2-PG) into phosphoenolpyruvate (PEP). It is essential for the degradation of carbohydrates via glycolysis. This is Enolase from Mycobacterium bovis (strain BCG / Pasteur 1173P2).